We begin with the raw amino-acid sequence, 376 residues long: Thymidine kinase (376 aa).

The tract at residues 1 to 39 is disordered; the sequence is MASYPCHQHASAFDQAARSRGHSNRRTALRPRRQQEATE. A compositionally biased stretch (basic residues) spans 19–32; it reads SRGHSNRRTALRPR. 56–63 contacts ATP; that stretch reads GPHGMGKT. Glutamate 83 (proton acceptor) is an active-site residue. 2 residues coordinate substrate: tyrosine 101 and glutamine 125. Arginine 216 provides a ligand contact to ATP. Residue arginine 222 coordinates substrate. Residues 260–280 are disordered; it reads GQLSGTAVPPQGAEPQSNAGP.

It belongs to the herpesviridae thymidine kinase family. Homodimer.

It carries out the reaction thymidine + ATP = dTMP + ADP + H(+). Functionally, catalyzes the transfer of the gamma-phospho group of ATP to thymidine to generate dTMP in the salvage pathway of pyrimidine synthesis. The dTMP serves as a substrate for DNA polymerase during viral DNA replication. Allows the virus to be reactivated and to grow in non-proliferative cells lacking a high concentration of phosphorylated nucleic acid precursors. The sequence is that of Thymidine kinase from Human herpesvirus 1 (strain KOS) (HHV-1).